Here is a 147-residue protein sequence, read N- to C-terminus: Transcription antitermination protein NusB (147 aa).

Belongs to the NusB family.

Functionally, involved in transcription antitermination. Required for transcription of ribosomal RNA (rRNA) genes. Binds specifically to the boxA antiterminator sequence of the ribosomal RNA (rrn) operons. The polypeptide is Transcription antitermination protein NusB (Teredinibacter turnerae (strain ATCC 39867 / T7901)).